A 355-amino-acid polypeptide reads, in one-letter code: 3-dehydroquinate synthase (355 aa).

NAD(+) contacts are provided by residues 105–109, 129–130, lysine 142, lysine 151, and 169–172; these read GVVGD, TS, and TLKT. Residues glutamate 184, histidine 246, and histidine 263 each coordinate Zn(2+).

The protein belongs to the sugar phosphate cyclases superfamily. Dehydroquinate synthase family. NAD(+) is required as a cofactor. It depends on Co(2+) as a cofactor. Zn(2+) serves as cofactor.

The protein resides in the cytoplasm. It catalyses the reaction 7-phospho-2-dehydro-3-deoxy-D-arabino-heptonate = 3-dehydroquinate + phosphate. Its pathway is metabolic intermediate biosynthesis; chorismate biosynthesis; chorismate from D-erythrose 4-phosphate and phosphoenolpyruvate: step 2/7. Catalyzes the conversion of 3-deoxy-D-arabino-heptulosonate 7-phosphate (DAHP) to dehydroquinate (DHQ). The chain is 3-dehydroquinate synthase from Streptococcus agalactiae serotype V (strain ATCC BAA-611 / 2603 V/R).